We begin with the raw amino-acid sequence, 176 residues long: PPE family protein PPE57 (176 aa).

Belongs to the mycobacterial PPE family. In terms of assembly, interacts with human TLR2.

The protein resides in the secreted. The protein localises to the cell wall. Its subcellular location is the cell surface. In terms of biological role, plays a key role in regulating innate and adaptive immune responses through human Toll-like receptor 2 (TLR2). Interacts with TLR2, leading to the subsequent activation of the mitogen-activated protein kinase (MAPK) and nuclear factor kappa B (NF-kappa-B) signaling pathways. Induces macrophage activation by augmenting the expression of several cell surface molecules (CD40, CD80, CD86 and MHC class II) and pro-inflammatory cytokines (TNF-alpha, IL-6 and IL-12p40) within macrophages. Also participates in adaptive immunity by directing Th1-polarised immune responses. Stimulates specific humoral and cellular immune responses in tuberculosis (TB) patients. Induces a strong IgG(1) antibody response and an increased Th1/Th2 type immune response in mice. The protein is PPE family protein PPE57 of Mycobacterium tuberculosis (strain ATCC 25618 / H37Rv).